We begin with the raw amino-acid sequence, 348 residues long: MNDRQAALDQALKQIEKQFGKGSIMKLGEHSDQNISTISSGSLALDIALGVGGYPRGRIIEVYGPESSGKTTVALHAIAEVQAQGGTAAFIDAEHALDPAYAKNLGVNIDELLLSQPDTGEQALEIAEALVRSGAVDMLVIDSVAALVPRAEIEGEMGDAHVGLQARLMSQALRKLSGVINKSKTIAIFINQIREKVGVMFGNPEITPGGRALKFYSTVRLEVRRAEQLKQGTDVMGNKTKIKVVKNKVAPPFRIAEVDIMYGEGISREGELVDMAAEVDVINKSGSWYSYKEERIGQGRENAKQYLKEHTDIRDEISKRVREEYEIDGSNKEPLDEGEETLSLLDDE.

Gly-64–Thr-71 provides a ligand contact to ATP. The segment covering Tyr-325–Leu-335 has biased composition (basic and acidic residues). Residues Tyr-325 to Glu-348 are disordered. The span at Asp-336–Glu-348 shows a compositional bias: acidic residues.

It belongs to the RecA family.

Its subcellular location is the cytoplasm. In terms of biological role, can catalyze the hydrolysis of ATP in the presence of single-stranded DNA, the ATP-dependent uptake of single-stranded DNA by duplex DNA, and the ATP-dependent hybridization of homologous single-stranded DNAs. It interacts with LexA causing its activation and leading to its autocatalytic cleavage. The chain is Protein RecA from Listeria monocytogenes serotype 4b (strain CLIP80459).